The following is a 977-amino-acid chain: Structural protein ORF43 (977 aa).

Residues 531–556 (DNDNINKQQQQQRERNDDDDDDDDST) form a disordered region.

The protein belongs to the ascovirus HvAV ORF146 family.

The protein resides in the virion. The chain is Structural protein ORF43 from Noctuidae (owlet moths).